The following is a 286-amino-acid chain: ATP-binding protein ChvD (286 aa).

The 65-residue stretch at 21–85 folds into the ABC transporter domain; that stretch reads KLQDMIDSQN…DLLLLDEPTN (65 aa).

Belongs to the ABC transporter superfamily.

In terms of biological role, the induction of virG by growth under acidic conditions and by phosphate starvation, in the absence of plant inducers, is influenced by ChvD. This Rhizobium radiobacter (Agrobacterium tumefaciens) protein is ATP-binding protein ChvD (chvD).